An 814-amino-acid polypeptide reads, in one-letter code: Protein fam-161 (814 aa).

Residues Ile-71–His-87 are compositionally biased toward polar residues. 4 disordered regions span residues Ile-71–Gln-130, Arg-150–Ala-255, Ser-569–Thr-610, and Met-714–Ala-814. The span at Met-99–Glu-111 shows a compositional bias: basic and acidic residues. Positions Ser-174 to Ser-193 are enriched in low complexity. Polar residues-rich tracts occupy residues Gly-194–His-207 and Arg-216–Asn-235. The span at Pro-236–Thr-249 shows a compositional bias: basic residues. 2 stretches are compositionally biased toward polar residues: residues Arg-570–Glu-583 and Glu-594–Thr-610. Positions Ser-606 to Asn-689 form a coiled coil. A compositionally biased stretch (basic and acidic residues) spans Met-714 to Ser-727. Over residues Gln-728–Gly-745 the composition is skewed to polar residues. The segment covering Lys-751 to Lys-765 has biased composition (basic and acidic residues). Composition is skewed to low complexity over residues Ser-766–Glu-779 and Ser-795–Ala-814.

This sequence belongs to the FAM161 family. In terms of tissue distribution, expressed in amphid and phasmid ciliated neurons.

The protein localises to the cell projection. It localises to the cilium. It is found in the cytoplasm. Its subcellular location is the cytoskeleton. The protein resides in the cilium axoneme. This Caenorhabditis elegans protein is Protein fam-161.